We begin with the raw amino-acid sequence, 473 residues long: ATP synthase subunit beta (473 aa).

An ATP-binding site is contributed by 153 to 160; sequence GGAGVGKT.

Belongs to the ATPase alpha/beta chains family. As to quaternary structure, F-type ATPases have 2 components, CF(1) - the catalytic core - and CF(0) - the membrane proton channel. CF(1) has five subunits: alpha(3), beta(3), gamma(1), delta(1), epsilon(1). CF(0) has three main subunits: a(1), b(2) and c(9-12). The alpha and beta chains form an alternating ring which encloses part of the gamma chain. CF(1) is attached to CF(0) by a central stalk formed by the gamma and epsilon chains, while a peripheral stalk is formed by the delta and b chains.

The protein resides in the cell inner membrane. It catalyses the reaction ATP + H2O + 4 H(+)(in) = ADP + phosphate + 5 H(+)(out). Its function is as follows. Produces ATP from ADP in the presence of a proton gradient across the membrane. The catalytic sites are hosted primarily by the beta subunits. This chain is ATP synthase subunit beta, found in Rickettsia rickettsii (strain Iowa).